We begin with the raw amino-acid sequence, 676 residues long: Methionine--tRNA ligase (676 aa).

Residues 15 to 25 carry the 'HIGH' region motif; sequence PYANGSIHLGH. Positions 146, 149, 159, and 162 each coordinate Zn(2+). The 'KMSKS' region motif lies at 332–336; sequence KMSKS. Residue Lys-335 participates in ATP binding. One can recognise a tRNA-binding domain in the interval 574-676; the sequence is DFAKVDMRIA…SGAQPGMQVK (103 aa).

Belongs to the class-I aminoacyl-tRNA synthetase family. MetG type 1 subfamily. Homodimer. Requires Zn(2+) as cofactor.

The protein localises to the cytoplasm. The catalysed reaction is tRNA(Met) + L-methionine + ATP = L-methionyl-tRNA(Met) + AMP + diphosphate. Its function is as follows. Is required not only for elongation of protein synthesis but also for the initiation of all mRNA translation through initiator tRNA(fMet) aminoacylation. The chain is Methionine--tRNA ligase from Pectobacterium atrosepticum (strain SCRI 1043 / ATCC BAA-672) (Erwinia carotovora subsp. atroseptica).